The primary structure comprises 428 residues: tRNA(Ile)-lysidine synthase (428 aa).

Residue 28–33 participates in ATP binding; sequence SGGVDS.

Belongs to the tRNA(Ile)-lysidine synthase family.

The protein resides in the cytoplasm. It carries out the reaction cytidine(34) in tRNA(Ile2) + L-lysine + ATP = lysidine(34) in tRNA(Ile2) + AMP + diphosphate + H(+). Its function is as follows. Ligates lysine onto the cytidine present at position 34 of the AUA codon-specific tRNA(Ile) that contains the anticodon CAU, in an ATP-dependent manner. Cytidine is converted to lysidine, thus changing the amino acid specificity of the tRNA from methionine to isoleucine. This Streptococcus pyogenes serotype M3 (strain ATCC BAA-595 / MGAS315) protein is tRNA(Ile)-lysidine synthase.